The following is a 347-amino-acid chain: MNHIQILEYENECQLANEVTYHPVYRIAQLWTFVVSILAIPALYIFLMKRILPLPFHGNIKFLLVCYFSASFVFAVLLAFLFSYHVVAPLFITSMCDLIIRPSLYKVGNLSLTLFMTIQMIMPLGFSIERFIALSMTKSYENVRTFLGPLLVFTLIGIDLALLYHVFRDEKFEDSFISFALVPETSAIPFNSYFWELLYAEIGNFICNCIFLLVHSKFKARFLHQQRSLSVRYLLEEISQTSKFTLIVSFTHLLFVGWYLIATIFVRTIGEDFFGGYIHYTVARGVHITVPTYNLTIVFVGIKALSFMNLRRQNNVQSKVQIRSTGAEGARNYEDAIANYWNFVSRT.

Helical transmembrane passes span 27-47 (IAQLWTFVVSILAIPALYIFL), 62-82 (FLLVCYFSASFVFAVLLAFLF), 108-128 (GNLSLTLFMTIQMIMPLGFSI), 146-166 (FLGPLLVFTLIGIDLALLYHV), 194-214 (FWELLYAEIGNFICNCIFLLV), 246-266 (LIVSFTHLLFVGWYLIATIFV), and 288-308 (ITVPTYNLTIVFVGIKALSFM).

The protein belongs to the nematode receptor-like protein srb family.

Its subcellular location is the membrane. In Caenorhabditis elegans, this protein is Serpentine receptor class beta-2 (srb-2).